The primary structure comprises 134 residues: Transcription antitermination protein NusB (134 aa).

This sequence belongs to the NusB family.

Its function is as follows. Involved in transcription antitermination. Required for transcription of ribosomal RNA (rRNA) genes. Binds specifically to the boxA antiterminator sequence of the ribosomal RNA (rrn) operons. This Shewanella loihica (strain ATCC BAA-1088 / PV-4) protein is Transcription antitermination protein NusB.